The chain runs to 411 residues: Coiled-coil domain-containing protein 159 (411 aa).

Positions 84–113 (EQAGKSGAWEKEWDSEPQPHEGTPCSSSDV) are disordered. Residues 91–102 (AWEKEWDSEPQP) show a composition bias toward basic and acidic residues. Residues 269–305 (EELELVREEVTFIYQKLQDQEDEISENLLNIQKMQKT) adopt a coiled-coil conformation. The interval 372–411 (RASSLRGQKGHQCKSSQCPSWDSDSDWERPFSKSGSYPPA) is disordered. Positions 384-393 (CKSSQCPSWD) are enriched in polar residues.

Interacts with DYNLT2. Interacts with GGNBP1. Interacts with OSBP2. In terms of tissue distribution, expressed in spermatids but undetectable in the spermatozoon (at protein level). Highly expressed in the testis (at protein level).

Functions during spermatid development; may participate in the centrosome reduction procedure of spermatids and is required for the formation of the connecting piece/sperm head-tail coupling apparatus (HTCA) and the correct and tight attachment of the flagellum to the nuclear envelope. This chain is Coiled-coil domain-containing protein 159 (Ccdc159), found in Mus musculus (Mouse).